A 732-amino-acid polypeptide reads, in one-letter code: Glycine--tRNA ligase (732 aa).

A mitochondrion-targeting transit peptide spans 1–27 (MRHVLSLVYKCSVFSKQVTVFSNHLRL). Residues 61 to 117 (ILAPLRANVKEQGDLVRKLKEEKAPEIDIKKAVAELKTRKKILEDKELSLAPAEDLF) enclose the WHEP-TRS domain. Glycine is bound at residue glutamate 297. Residues 329–331 (RNE) and 340–341 (RV) contribute to the ATP site. Glutamate 348 contributes to the glycine binding site. Residue 453–454 (EC) coordinates ATP. 572 to 574 (EPS) contacts glycine. An ATP-binding site is contributed by arginine 579.

The protein belongs to the class-II aminoacyl-tRNA synthetase family. As to quaternary structure, homodimer.

Its subcellular location is the mitochondrion. The protein localises to the cytoplasm. It localises to the cell projection. It is found in the axon. The enzyme catalyses tRNA(Gly) + glycine + ATP = glycyl-tRNA(Gly) + AMP + diphosphate. It carries out the reaction 2 ATP + H(+) = P(1),P(4)-bis(5'-adenosyl) tetraphosphate + diphosphate. Functionally, catalyzes the ATP-dependent ligation of glycine to the 3'-end of its cognate tRNA, via the formation of an aminoacyl-adenylate intermediate (Gly-AMP). Also produces diadenosine tetraphosphate (Ap4A), a universal pleiotropic signaling molecule needed for cell regulation pathways, by direct condensation of 2 ATPs. Thereby, may play a special role in Ap4A homeostasis. Required for terminal arborization of both dendrites and axons during development. The protein is Glycine--tRNA ligase of Bombyx mori (Silk moth).